A 400-amino-acid polypeptide reads, in one-letter code: Iron(III) enterobactin esterase (400 aa).

The protein belongs to the Fes family.

The protein localises to the cytoplasm. The catalysed reaction is Fe(III)-enterobactin + 3 H2O + H(+) = Fe(III)-[N-(2,3-dihydroxybenzoyl)-L-serine] + 2 N-(2,3-dihydroxybenzoyl)-L-serine. The enzyme catalyses Fe(III)-enterobactin + H2O = Fe(III)-[N-(2,3-dihydroxybenzoyl)-L-serine]3 + H(+). It catalyses the reaction Fe(III)-[N-(2,3-dihydroxybenzoyl)-L-serine]3 + H2O + H(+) = Fe(III)-[N-(2,3-dihydroxybenzoyl)-L-serine]2 + N-(2,3-dihydroxybenzoyl)-L-serine. It carries out the reaction Fe(III)-[N-(2,3-dihydroxybenzoyl)-L-serine]2 + H2O + H(+) = Fe(III)-[N-(2,3-dihydroxybenzoyl)-L-serine] + N-(2,3-dihydroxybenzoyl)-L-serine. The catalysed reaction is enterobactin + 3 H2O = 3 N-(2,3-dihydroxybenzoyl)-L-serine + 2 H(+). Its function is as follows. Catalyzes the hydrolysis of ferric enterobactin (Fe-Ent). Is responsible for the release of iron from ferric enterobactin. Also catalyzes the hydrolysis of iron-free enterobactin (Ent). Hydrolyzes ferric monoglucosyl-C-Ent (Fe-MGE) poorly and does not hydrolyze ferric diglucosyl-C-Ent (Fe-DGE) or ferric triglucosyl-C-Ent (Fe-TGE) at all. Also hydrolyzes apo MGE, but catalyzes the hydrolysis of apo DGE very poorly, and does not process apo TGE at all. The catalytic efficiency for processing Fe-Ent is much higher than that for apo Ent, suggesting that Fe-Ent is the physiological substrate. The sequence is that of Iron(III) enterobactin esterase from Escherichia coli O6:H1 (strain CFT073 / ATCC 700928 / UPEC).